Here is a 361-residue protein sequence, read N- to C-terminus: DNA replication and repair protein RecF (361 aa).

30-37 (GANGSGKT) serves as a coordination point for ATP.

This sequence belongs to the RecF family.

It is found in the cytoplasm. Its function is as follows. The RecF protein is involved in DNA metabolism; it is required for DNA replication and normal SOS inducibility. RecF binds preferentially to single-stranded, linear DNA. It also seems to bind ATP. In Chromohalobacter salexigens (strain ATCC BAA-138 / DSM 3043 / CIP 106854 / NCIMB 13768 / 1H11), this protein is DNA replication and repair protein RecF.